Reading from the N-terminus, the 166-residue chain is Large ribosomal subunit protein uL10 (166 aa).

The protein belongs to the universal ribosomal protein uL10 family. As to quaternary structure, part of the ribosomal stalk of the 50S ribosomal subunit. The N-terminus interacts with L11 and the large rRNA to form the base of the stalk. The C-terminus forms an elongated spine to which L12 dimers bind in a sequential fashion forming a multimeric L10(L12)X complex.

Its function is as follows. Forms part of the ribosomal stalk, playing a central role in the interaction of the ribosome with GTP-bound translation factors. This chain is Large ribosomal subunit protein uL10, found in Shewanella amazonensis (strain ATCC BAA-1098 / SB2B).